The sequence spans 61 residues: Conotoxin 3 (61 aa).

Residues 1 to 21 (MRCLPVFVILLLLIASVPSDA) form the signal peptide. Residues 22–48 (VQLKTKDDMPLPSFNGNARRTPRMLSN) constitute a propeptide that is removed on maturation. 6'-bromotryptophan is present on Trp-58.

Belongs to the conotoxin T superfamily. Contains 2 disulfide bonds that can be either 'C1-C3, C2-C4' or 'C1-C4, C2-C3', since these disulfide connectivities have been observed for conotoxins with cysteine framework V (for examples, see AC P0DQQ7 and AC P81755). Post-translationally, contains 2 disulfide bonds. Expressed by the venom duct.

It is found in the secreted. This Conus textile (Cloth-of-gold cone) protein is Conotoxin 3.